The primary structure comprises 310 residues: MLDANKLQQAVDQAYTQFHSLNGGQNADYIPFLANVPGQLAAVAIVTCDGNVYSAGDSDYRFALESISKVCTLALALEDVGPQAVQDKIGADPTGLPFNSVIALELHGGKPLSPLVNAGAIATTSLINAENVEQRWQRILHIQQQLAGEQVALSDEVNQSEQTTNFHNRAIAWLLYSAGYLYCDAMEACDVYTRQCSTLLNTIELATLGATLAAGGVNPLTHKRVLQADNVPYILAEMMMEGLYGRSGDWAYRVGLPGKSGVGGGILAVVPGVMGIAAFSPPLDEDGNSVRGQKMVASVAKQLGYNVFKG.

Residues Ser-66, Asn-117, Glu-161, Asn-168, Tyr-192, Tyr-244, and Val-262 each contribute to the substrate site. N6-acetyllysine is present on Lys-294.

This sequence belongs to the glutaminase family. In terms of assembly, homotetramer.

The enzyme catalyses L-glutamine + H2O = L-glutamate + NH4(+). The polypeptide is Glutaminase 1 (Escherichia coli (strain K12)).